A 158-amino-acid chain; its full sequence is Protein Smg homolog (158 aa).

It belongs to the Smg family.

This is Protein Smg homolog from Thioalkalivibrio sulfidiphilus (strain HL-EbGR7).